Reading from the N-terminus, the 324-residue chain is DNA repair and recombination protein RadA (324 aa).

Residue 107-114 coordinates ATP; it reads GEFGSGKS.

This sequence belongs to the eukaryotic RecA-like protein family.

Its function is as follows. Involved in DNA repair and in homologous recombination. Binds and assemble on single-stranded DNA to form a nucleoprotein filament. Hydrolyzes ATP in a ssDNA-dependent manner and promotes DNA strand exchange between homologous DNA molecules. This is DNA repair and recombination protein RadA from Methanoculleus marisnigri (strain ATCC 35101 / DSM 1498 / JR1).